A 533-amino-acid chain; its full sequence is Probable metalloreductase AIM14 (533 aa).

7 helical membrane-spanning segments follow: residues 17–37, 61–81, 102–122, 136–156, 168–188, 198–218, and 220–240; these read IPYG…LIGA, GGSP…PFVH, VLAT…PGYV, SLCL…ALDS, IPNL…LLSV, SFYL…AYHA, and PGVF…YILS. A Ferric oxidoreductase domain is found at 96–213; the sequence is LGRLSYVLAT…IIGAWVFVFL (118 aa). The FAD-binding FR-type domain occupies 240-366; sequence SKTVPARGVE…GGSGLSYALP (127 aa).

It belongs to the ferric reductase (FRE) family. AIM14 subfamily.

Its subcellular location is the membrane. Its function is as follows. Probable cell surface metalloreductase. May be involved in iron or copper homeostasis. This is Probable metalloreductase AIM14 (AIM14) from Lachancea thermotolerans (strain ATCC 56472 / CBS 6340 / NRRL Y-8284) (Yeast).